Reading from the N-terminus, the 146-residue chain is Large ribosomal subunit protein uL13 (146 aa).

It belongs to the universal ribosomal protein uL13 family. As to quaternary structure, part of the 50S ribosomal subunit.

In terms of biological role, this protein is one of the early assembly proteins of the 50S ribosomal subunit, although it is not seen to bind rRNA by itself. It is important during the early stages of 50S assembly. The polypeptide is Large ribosomal subunit protein uL13 (Sulfurisphaera tokodaii (strain DSM 16993 / JCM 10545 / NBRC 100140 / 7) (Sulfolobus tokodaii)).